The chain runs to 588 residues: Interferon-activable protein 208 (588 aa).

Residues 5–92 (MVNYYKQIVL…VDILRKEMEK (88 aa)) form the Pyrin domain. Disordered regions lie at residues 157–183 (ATST…SLQT) and 469–526 (EMQN…RRVN). Polar residues-rich tracts occupy residues 172 to 183 (RFPTTASSSLQT) and 470 to 487 (MQNP…QPRL).

It belongs to the HIN-200 family.

The sequence is that of Interferon-activable protein 208 from Mus musculus (Mouse).